The following is a 157-amino-acid chain: Small ribosomal subunit protein uS9 (157 aa).

This sequence belongs to the universal ribosomal protein uS9 family.

This Caulobacter sp. (strain K31) protein is Small ribosomal subunit protein uS9.